The primary structure comprises 71 residues: Large ribosomal subunit protein uL29 (71 aa).

Belongs to the universal ribosomal protein uL29 family.

The polypeptide is Large ribosomal subunit protein uL29 (Methanocella arvoryzae (strain DSM 22066 / NBRC 105507 / MRE50)).